We begin with the raw amino-acid sequence, 28 residues long: Venom protein (28 aa).

A disordered region spans residues 1–28 (KEGYPDGQNGKKIPCAINDNISKTXEQA). Positions 19–28 (DNISKTXEQA) are enriched in polar residues.

As to expression, expressed by the venom gland.

Its subcellular location is the secreted. In terms of biological role, causes symptoms of mild intoxication and transient paralysis in insects (A.domestica). This is Venom protein from Rhopalurus junceus (Caribbean blue scorpion).